The sequence spans 288 residues: Protease HtpX homolog (288 aa).

2 helical membrane passes run 6-26 (TAFLMVALMLVFIAVGGYVGG) and 28-48 (QGMMIAFLMAAGMNIFSYFFS). His-130 serves as a coordination point for Zn(2+). The active site involves Glu-131. His-134 serves as a coordination point for Zn(2+). Helical transmembrane passes span 140 to 160 (ILTGSVAAILAGAIAMVANFA) and 179 to 199 (VIMLIIAVVMPLAATVIQMAI). Glu-204 provides a ligand contact to Zn(2+).

This sequence belongs to the peptidase M48B family. It depends on Zn(2+) as a cofactor.

It localises to the cell inner membrane. The chain is Protease HtpX homolog from Campylobacter concisus (strain 13826).